Here is a 352-residue protein sequence, read N- to C-terminus: N-acetyl-gamma-glutamyl-phosphate reductase (352 aa).

The active site involves cysteine 158.

It belongs to the NAGSA dehydrogenase family. Type 1 subfamily.

It localises to the cytoplasm. The enzyme catalyses N-acetyl-L-glutamate 5-semialdehyde + phosphate + NADP(+) = N-acetyl-L-glutamyl 5-phosphate + NADPH + H(+). The protein operates within amino-acid biosynthesis; L-arginine biosynthesis; N(2)-acetyl-L-ornithine from L-glutamate: step 3/4. In terms of biological role, catalyzes the NADPH-dependent reduction of N-acetyl-5-glutamyl phosphate to yield N-acetyl-L-glutamate 5-semialdehyde. The sequence is that of N-acetyl-gamma-glutamyl-phosphate reductase from Mycobacterium bovis (strain BCG / Tokyo 172 / ATCC 35737 / TMC 1019).